A 121-amino-acid chain; its full sequence is Large ribosomal subunit protein eL34B (121 aa).

Belongs to the eukaryotic ribosomal protein eL34 family. In terms of assembly, component of the large ribosomal subunit (LSU). Mature yeast ribosomes consist of a small (40S) and a large (60S) subunit. The 40S small subunit contains 1 molecule of ribosomal RNA (18S rRNA) and 33 different proteins (encoded by 57 genes). The large 60S subunit contains 3 rRNA molecules (25S, 5.8S and 5S rRNA) and 46 different proteins (encoded by 81 genes).

The protein localises to the cytoplasm. Its function is as follows. Component of the ribosome, a large ribonucleoprotein complex responsible for the synthesis of proteins in the cell. The small ribosomal subunit (SSU) binds messenger RNAs (mRNAs) and translates the encoded message by selecting cognate aminoacyl-transfer RNA (tRNA) molecules. The large subunit (LSU) contains the ribosomal catalytic site termed the peptidyl transferase center (PTC), which catalyzes the formation of peptide bonds, thereby polymerizing the amino acids delivered by tRNAs into a polypeptide chain. The nascent polypeptides leave the ribosome through a tunnel in the LSU and interact with protein factors that function in enzymatic processing, targeting, and the membrane insertion of nascent chains at the exit of the ribosomal tunnel. This Saccharomyces cerevisiae (strain ATCC 204508 / S288c) (Baker's yeast) protein is Large ribosomal subunit protein eL34B.